We begin with the raw amino-acid sequence, 155 residues long: Large ribosomal subunit protein uL13 (155 aa).

This sequence belongs to the universal ribosomal protein uL13 family. Part of the 50S ribosomal subunit.

In terms of biological role, this protein is one of the early assembly proteins of the 50S ribosomal subunit, although it is not seen to bind rRNA by itself. It is important during the early stages of 50S assembly. In Rickettsia conorii (strain ATCC VR-613 / Malish 7), this protein is Large ribosomal subunit protein uL13.